The chain runs to 551 residues: Ubiquitin domain-containing protein DSK2b (551 aa).

Residues 18 to 93 (VAVNIRCSNG…IHMVRGSAPS (76 aa)) enclose the Ubiquitin-like domain. Residues 88–127 (RGSAPSSAPPPAPAASQTTAPSVTRGVGSDNSSNLGGASP) form a disordered region. 2 STI1 domains span residues 143–184 (GNAM…QNLM) and 197–236 (NPQMRELVDRNPELGHVLNDPSILRQTLEAARNPELMREM). The span at 294 to 319 (QGVTTQGSDASNNSSTPNAGTGTIPN) shows a compositional bias: polar residues. Residues 294–336 (QGVTTQGSDASNNSSTPNAGTGTIPNANPLPNPWGATGGQTTA) form a disordered region. STI1 domains follow at residues 373 to 410 (SPLGATPDASQLSQLLQNPAISQMMQSVFSNPQYMNQL) and 414 to 449 (NPQLRSMLDSNPQLREMMQNPDFLRQFSSPEMMQQM). Residues 455 to 475 (SLSQNRNTASQDAGQTGAATG) are disordered. A compositionally biased stretch (low complexity) spans 465–475 (QDAGQTGAATG). The region spanning 504–548 (PPEERYATQLQQLQEMGFYDRAENIRALLATNGNVNAAVERLLGS) is the UBA domain.

In terms of assembly, interacts with 'Lys-48'-linked polyubiquitin chains via its UBA domain. Interacts with RPN10 via its ubiquitin-like domain. Interacts with PEX2 and PEX12. As to expression, ubiquitous.

It is found in the nucleus. The protein resides in the cytoplasm. Binds and presumably selects ubiquitin-conjugates for destruction. Prefers multiubiquitin chains rather than single ubiquitins, with a binding affinity for 'Lys-48'-linked ubiquitin chains. Acts as a ubiquitin receptor that associates with the 26S proteasomal docking subunit RPN10 for the indirect recognition of ubiquitinated substrates of ubiquitin/26S proteasome-mediated proteolysis (UPP). The protein is Ubiquitin domain-containing protein DSK2b (DSK2B) of Arabidopsis thaliana (Mouse-ear cress).